The primary structure comprises 362 residues: Transcription factor bHLH128 (362 aa).

Positions 1–16 (MYQSSSSTSSSSQRSS) are enriched in low complexity. 4 disordered regions span residues 1–23 (MYQS…GGGL), 78–106 (SDST…SNKD), 120–140 (SQQH…YSLA), and 162–184 (LNQP…HSRL). Polar residues predominate over residues 78–96 (SDSTTCGVNNSSDGQKQLG). The segment covering 162–173 (LNQPTSDYSPQG) has biased composition (polar residues). Ser189 is modified (phosphoserine). One can recognise a bHLH domain in the interval 289–339 (CATHPRSIAERERRTRISGKLKKLQDLVPNMDKQTSYSDMLDLAVQHIKGL).

In terms of assembly, homodimer.

It localises to the nucleus. The protein is Transcription factor bHLH128 (BHLH128) of Arabidopsis thaliana (Mouse-ear cress).